A 109-amino-acid chain; its full sequence is Cytochrome c (109 aa).

Cys-25, Cys-28, His-29, and Met-88 together coordinate heme c.

The protein belongs to the cytochrome c family. In terms of processing, binds 1 heme c group covalently per subunit.

The protein resides in the mitochondrion intermembrane space. Its function is as follows. Electron carrier protein. The oxidized form of the cytochrome c heme group can accept an electron from the heme group of the cytochrome c1 subunit of cytochrome reductase. Cytochrome c then transfers this electron to the cytochrome oxidase complex, the final protein carrier in the mitochondrial electron-transport chain. The sequence is that of Cytochrome c from Tetrahymena pyriformis.